The chain runs to 155 residues: Ribosomal RNA large subunit methyltransferase H (155 aa).

Residues leucine 73, glycine 104, and 123-128 (LSALTL) each bind S-adenosyl-L-methionine.

This sequence belongs to the RNA methyltransferase RlmH family. In terms of assembly, homodimer.

The protein resides in the cytoplasm. The enzyme catalyses pseudouridine(1915) in 23S rRNA + S-adenosyl-L-methionine = N(3)-methylpseudouridine(1915) in 23S rRNA + S-adenosyl-L-homocysteine + H(+). Specifically methylates the pseudouridine at position 1915 (m3Psi1915) in 23S rRNA. In Chromohalobacter salexigens (strain ATCC BAA-138 / DSM 3043 / CIP 106854 / NCIMB 13768 / 1H11), this protein is Ribosomal RNA large subunit methyltransferase H.